We begin with the raw amino-acid sequence, 536 residues long: Solute carrier family 2, facilitated glucose transporter member 10 (536 aa).

The Cytoplasmic portion of the chain corresponds to Met-1 to Ser-15. A helical membrane pass occupies residues Leu-16–Leu-36. Residues Gln-37–Glu-48 lie on the Extracellular side of the membrane. The chain crosses the membrane as a helical span at residues Leu-49–Ile-69. Residues Asp-70–Asn-82 are Cytoplasmic-facing. A helical membrane pass occupies residues Ala-83 to Leu-103. Over Gly-104–Ser-107 the chain is Extracellular. The helical transmembrane segment at Val-108–Gly-128 threads the bilayer. Residues Pro-129 to Arg-132 lie on the Cytoplasmic side of the membrane. Residues Gly-133–Leu-153 traverse the membrane as a helical segment. The Extracellular segment spans residues Asn-154–His-166. The chain crosses the membrane as a helical span at residues Met-167–Ala-187. The Cytoplasmic portion of the chain corresponds to Gly-188–Thr-232. A helical membrane pass occupies residues Val-233–Tyr-253. Gln-242–Gln-243 is a binding site for D-glucose. The Extracellular segment spans residues Ala-254–Ala-269. A helical transmembrane segment spans residues Val-270–Leu-290. At Val-291–Val-298 the chain is on the cytoplasmic side. The chain crosses the membrane as a helical span at residues Leu-299–Phe-319. The Extracellular segment spans residues Ala-320 to Thr-402. A helical membrane pass occupies residues Leu-403–Phe-423. Over Gly-424–Arg-442 the chain is Cytoplasmic. Trp-428 provides a ligand contact to D-glucose. Residues Ala-443–Leu-463 form a helical membrane-spanning segment. Residues Asp-464–Ala-468 are Extracellular-facing. Residues Ile-469 to Ile-489 form a helical membrane-spanning segment. The Cytoplasmic segment spans residues Tyr-490 to Ser-536.

The protein belongs to the major facilitator superfamily. Sugar transporter (TC 2.A.1.1) family. Glucose transporter subfamily.

It is found in the endomembrane system. It localises to the cytoplasm. Its subcellular location is the perinuclear region. It carries out the reaction D-glucose(out) = D-glucose(in). Functionally, facilitative glucose transporter required for the development of the cardiovascular system. This chain is Solute carrier family 2, facilitated glucose transporter member 10, found in Mus musculus (Mouse).